Consider the following 189-residue polypeptide: Chitin synthase 1 (189 aa).

It belongs to the chitin synthase family.

It is found in the cell membrane. It carries out the reaction [(1-&gt;4)-N-acetyl-beta-D-glucosaminyl](n) + UDP-N-acetyl-alpha-D-glucosamine = [(1-&gt;4)-N-acetyl-beta-D-glucosaminyl](n+1) + UDP + H(+). Functionally, polymerizes chitin, a structural polymer of the cell wall and septum, by transferring the sugar moiety of UDP-GlcNAc to the non-reducing end of the growing chitin polymer. The polypeptide is Chitin synthase 1 (CHS1) (Schizophyllum commune (Split gill fungus)).